The chain runs to 257 residues: MADNQEERPHFPLDEGSIIEGVSDQVIVVVLLSFVAVGSLIYLLLRNDEQNIHPENQDRVRAVREQLQNEQETPAPPRPQFYSDMTCPVCLQQATFPVETNCGHLFCGSCIIAYWRYGTWLGAINCPICRQTVTLLFPLFGATDQEDAQNILQEATGYNRRFSGQPRSLMDRIMDLPTLLRHAFREMFSVGGLFWMFRIRIVLCLLGALLYLVSPLDIIPEALFGILGFLDDLFVLFLLLIYISIMYREVVTQRLYR.

Residues 1-24 lie on the Lumenal side of the membrane; it reads MADNQEERPHFPLDEGSIIEGVSD. The chain crosses the membrane as a helical span at residues 25 to 45; that stretch reads QVIVVVLLSFVAVGSLIYLLL. Over 46–200 the chain is Cytoplasmic; sequence RNDEQNIHPE…GGLFWMFRIR (155 aa). The RING-type zinc-finger motif lies at 87–130; the sequence is CPVCLQQATFPVETNCGHLFCGSCIIAYWRYGTWLGAINCPICR. A helical transmembrane segment spans residues 201–221; that stretch reads IVLCLLGALLYLVSPLDIIPE. Residue A222 is a topological domain, lumenal. A helical transmembrane segment spans residues 223 to 243; sequence LFGILGFLDDLFVLFLLLIYI. At 244–257 the chain is on the cytoplasmic side; that stretch reads SIMYREVVTQRLYR.

The protein resides in the endoplasmic reticulum membrane. The enzyme catalyses S-ubiquitinyl-[E2 ubiquitin-conjugating enzyme]-L-cysteine + [acceptor protein]-L-lysine = [E2 ubiquitin-conjugating enzyme]-L-cysteine + N(6)-ubiquitinyl-[acceptor protein]-L-lysine.. It participates in protein modification; protein ubiquitination. Functionally, E3 ubiquitin-protein ligase that plays an essential role in stimulus-induced inositol 1,4,5-trisphosphate receptor (ITPR) ubiquitination and degradation via the endoplasmic reticulum-associated degradation (ERAD) pathway. Also involved in ITPR turnover in resting cells. The protein is E3 ubiquitin-protein ligase RNF170 (rnf170) of Xenopus laevis (African clawed frog).